The chain runs to 231 residues: Chromosome partition protein MukE (231 aa).

The disordered stretch occupies residues 204-231 (TPEPSQQSLLENPTAEYDEEQTEWEDEA). The segment covering 219–231 (EYDEEQTEWEDEA) has biased composition (acidic residues).

This sequence belongs to the MukE family. As to quaternary structure, interacts, and probably forms a ternary complex, with MukF and MukB. The complex formation is stimulated by calcium or magnesium.

The protein resides in the cytoplasm. The protein localises to the nucleoid. Involved in chromosome condensation, segregation and cell cycle progression. May participate in facilitating chromosome segregation by condensation DNA from both sides of a centrally located replisome during cell division. Probably acts via its interaction with MukB and MukF. This is Chromosome partition protein MukE from Vibrio cholerae serotype O1 (strain ATCC 39315 / El Tor Inaba N16961).